Consider the following 185-residue polypeptide: NEDD8-conjugating enzyme UBE2F (185 aa).

Positions 1-29 (MLTLASKLKREEGVRAGRTPAGSNDAAHR) are interaction with uba3. Positions 32-185 (IRDRLLIKEV…VQDFIKNYAR (154 aa)) constitute a UBC core domain. The Glycyl thioester intermediate role is filled by Cys-116.

This sequence belongs to the ubiquitin-conjugating enzyme family. UBE2F subfamily.

It catalyses the reaction [E1 NEDD8-activating enzyme]-S-[NEDD8 protein]-yl-L-cysteine + [E2 NEDD8-conjugating enzyme]-L-cysteine = [E1 NEDD8-activating enzyme]-L-cysteine + [E2 NEDD8-conjugating enzyme]-S-[NEDD8-protein]-yl-L-cysteine.. The protein operates within protein modification; protein neddylation. Its function is as follows. Accepts the ubiquitin-like protein NEDD8 from the UBA3-NAE1 E1 complex and catalyzes its covalent attachment to other proteins. Together with the E3 ubiquitin ligase rnf7/rbx2, specifically neddylates cullin-5 (cul5). Does not neddylate cul1, cul2, cul3, cul4a or cul4b. This Danio rerio (Zebrafish) protein is NEDD8-conjugating enzyme UBE2F (ube2f).